The primary structure comprises 230 residues: PKHD-type hydroxylase Xfasm12_1709 (230 aa).

Residues 78–182 (RTLPPRFNRY…RIASFFWVQS (105 aa)) form the Fe2OG dioxygenase domain. Residues H96, D98, and H163 each contribute to the Fe cation site. R173 serves as a coordination point for 2-oxoglutarate.

Fe(2+) is required as a cofactor. The cofactor is L-ascorbate.

The sequence is that of PKHD-type hydroxylase Xfasm12_1709 from Xylella fastidiosa (strain M12).